Reading from the N-terminus, the 332-residue chain is Arrestin domain-containing protein 5 (332 aa).

Residues 311 to 332 form a disordered region; it reads SNQTAAGCRTRAPLPVSPDQQN.

The protein belongs to the arrestin family.

Its subcellular location is the membrane. Its function is as follows. Plays an essential role in spermatogenesis. May be involved in the anchoring of the sperm head to the tail during spermatogenesis by affecting SEC22A-mediated SUN5 and NDC1 transport and localization. The chain is Arrestin domain-containing protein 5 (ARRDC5) from Bos taurus (Bovine).